The primary structure comprises 352 residues: Ion-translocating oxidoreductase complex subunit D (352 aa).

4 helical membrane-spanning segments follow: residues 20–40 (IMLL…WFFG), 42–62 (GTLV…ALVL), 89–109 (IPPL…AIIA), and 123–143 (PAMI…TSWL). T187 is subject to FMN phosphoryl threonine. Helical transmembrane passes span 214 to 234 (ILAG…GLWL), 242 to 262 (WHIP…GWLF), 267 to 287 (LAAP…FFIL), 301 to 321 (LIFG…GGYP), and 322 to 342 (DGVA…DYYT).

This sequence belongs to the NqrB/RnfD family. In terms of assembly, the complex is composed of six subunits: RsxA, RsxB, RsxC, RsxD, RsxE and RsxG. The cofactor is FMN.

Its subcellular location is the cell inner membrane. Functionally, part of a membrane-bound complex that couples electron transfer with translocation of ions across the membrane. Required to maintain the reduced state of SoxR. The sequence is that of Ion-translocating oxidoreductase complex subunit D from Escherichia coli (strain ATCC 8739 / DSM 1576 / NBRC 3972 / NCIMB 8545 / WDCM 00012 / Crooks).